Reading from the N-terminus, the 207-residue chain is uncharacterized protein (207 aa).

The protein belongs to the flavoredoxin family. FMN is required as a cofactor.

This is an uncharacterized protein from Bacillus subtilis (strain 168).